A 161-amino-acid chain; its full sequence is Aklanonic acid methyl ester cyclase DauD (161 aa).

Residue Gln-106 coordinates substrate. The segment at 137-161 is disordered; that stretch reads WPTPEGWRPCPPPPRRRHDRSTDTP.

It belongs to the polyketide cyclase DnrD family. As to quaternary structure, homotetramer.

The enzyme catalyses methyl aklanonate = aklaviketone. It participates in antibiotic biosynthesis; daunorubicin biosynthesis. Its pathway is antibiotic biosynthesis; carminomycin biosynthesis. The protein operates within antibiotic biosynthesis; rhodomycin biosynthesis. It functions in the pathway antibiotic biosynthesis; aclacinomycin biosynthesis. Involved in the biosynthesis of aklavinone which is an important precursor common to the formation of the clinically significant anthracyclines such as carminomycin, daunorubicin (daunomycin), rhodomycin, aclacinomycin T (aklavin) and aclacinomycin A (aclarubicin). These compounds are aromatic polyketide antibiotics that exhibit high cytotoxicity and are widely applied in the chemotherapy of a variety of cancers. Catalyzes the cyclization of aklanonic acid methyl ester to yield aklaviketone. In Streptomyces sp. (strain C5), this protein is Aklanonic acid methyl ester cyclase DauD (dauD).